The chain runs to 359 residues: tRNA-specific 2-thiouridylase MnmA (359 aa).

Residues 9-16 and Met35 contribute to the ATP site; that span reads GMSGGVDS. Cys105 acts as the Nucleophile in catalysis. The cysteines at positions 105 and 203 are disulfide-linked. ATP is bound at residue Gly129. The interval 153-155 is interaction with tRNA; the sequence is KDQ. Cys203 functions as the Cysteine persulfide intermediate in the catalytic mechanism. Residues 309–310 are interaction with tRNA; that stretch reads RY.

This sequence belongs to the MnmA/TRMU family.

The protein resides in the cytoplasm. It carries out the reaction S-sulfanyl-L-cysteinyl-[protein] + uridine(34) in tRNA + AH2 + ATP = 2-thiouridine(34) in tRNA + L-cysteinyl-[protein] + A + AMP + diphosphate + H(+). Its function is as follows. Catalyzes the 2-thiolation of uridine at the wobble position (U34) of tRNA, leading to the formation of s(2)U34. The polypeptide is tRNA-specific 2-thiouridylase MnmA (Acetivibrio thermocellus (strain ATCC 27405 / DSM 1237 / JCM 9322 / NBRC 103400 / NCIMB 10682 / NRRL B-4536 / VPI 7372) (Clostridium thermocellum)).